A 252-amino-acid polypeptide reads, in one-letter code: Probable transcriptional regulatory protein Npun_R5651 (252 aa).

Belongs to the TACO1 family.

The protein resides in the cytoplasm. The sequence is that of Probable transcriptional regulatory protein Npun_R5651 from Nostoc punctiforme (strain ATCC 29133 / PCC 73102).